Here is a 940-residue protein sequence, read N- to C-terminus: BTB/POZ domain-containing protein FBL11 (940 aa).

The BTB domain occupies Trp-41–Ser-109. The 104-residue stretch at Ile-155–Ala-258 folds into the BACK domain.

It participates in protein modification; protein ubiquitination. In terms of biological role, may act as a substrate-specific adapter of an E3 ubiquitin-protein ligase complex (CUL3-RBX1-BTB) which mediates the ubiquitination and subsequent proteasomal degradation of target proteins. This chain is BTB/POZ domain-containing protein FBL11 (FBL11), found in Arabidopsis thaliana (Mouse-ear cress).